We begin with the raw amino-acid sequence, 106 residues long: Large ribosomal subunit protein uL24 (106 aa).

Belongs to the universal ribosomal protein uL24 family. Part of the 50S ribosomal subunit.

In terms of biological role, one of two assembly initiator proteins, it binds directly to the 5'-end of the 23S rRNA, where it nucleates assembly of the 50S subunit. Functionally, one of the proteins that surrounds the polypeptide exit tunnel on the outside of the subunit. The protein is Large ribosomal subunit protein uL24 of Desulforamulus reducens (strain ATCC BAA-1160 / DSM 100696 / MI-1) (Desulfotomaculum reducens).